Consider the following 403-residue polypeptide: Ribosomal RNA large subunit methyltransferase I (403 aa).

In terms of domain architecture, PUA spans 9 to 88; that stretch reads YPRLVLSKGR…ESIDIAFFTR (80 aa).

This sequence belongs to the methyltransferase superfamily. RlmI family.

The protein resides in the cytoplasm. The enzyme catalyses cytidine(1962) in 23S rRNA + S-adenosyl-L-methionine = 5-methylcytidine(1962) in 23S rRNA + S-adenosyl-L-homocysteine + H(+). Its function is as follows. Specifically methylates the cytosine at position 1962 (m5C1962) of 23S rRNA. This Salmonella schwarzengrund (strain CVM19633) protein is Ribosomal RNA large subunit methyltransferase I.